The sequence spans 511 residues: GMP synthase [glutamine-hydrolyzing] (511 aa).

Residues 5-195 enclose the Glutamine amidotransferase type-1 domain; that stretch reads DILVLDFGSQ…AKYACNCESV (191 aa). C82 (nucleophile) is an active-site residue. Residues H169 and E171 contribute to the active site. The GMPS ATP-PPase domain occupies 196 to 386; the sequence is WNMGSFAKTQ…LGLSKEVVYR (191 aa). Residue 223-229 coordinates ATP; that stretch reads SGGVDSS.

As to quaternary structure, homodimer.

The enzyme catalyses XMP + L-glutamine + ATP + H2O = GMP + L-glutamate + AMP + diphosphate + 2 H(+). The protein operates within purine metabolism; GMP biosynthesis; GMP from XMP (L-Gln route): step 1/1. Functionally, catalyzes the synthesis of GMP from XMP. The chain is GMP synthase [glutamine-hydrolyzing] from Campylobacter jejuni subsp. jejuni serotype O:23/36 (strain 81-176).